The chain runs to 91 residues: Putative membrane protein insertion efficiency factor (91 aa).

Positions 72-91 are disordered; sequence SGGNDPVPEKLTHINHQHEK. Positions 78 to 91 are enriched in basic and acidic residues; it reads VPEKLTHINHQHEK.

The protein belongs to the UPF0161 family.

The protein resides in the cell inner membrane. Functionally, could be involved in insertion of integral membrane proteins into the membrane. In Pseudoalteromonas translucida (strain TAC 125), this protein is Putative membrane protein insertion efficiency factor.